Here is an 898-residue protein sequence, read N- to C-terminus: Vacuolar protein sorting-associated protein 41 homolog (898 aa).

A compositionally biased stretch (basic and acidic residues) spans 1 to 10; sequence MDESNDKENE. Residues 1 to 35 form a disordered region; it reads MDESNDKENEFGDSFLEDSGDITRTTEDEDEAPLE. Residues 614–756 form a CHCR repeat; the sequence is LRLLLDNADS…VADFPTHFSQ (143 aa). The RING-type; atypical zinc finger occupies 835–890; sequence CSLCSQVIMNTGQDMIPRKFNDIKVFKCGHIFHLTCSASEIDRRQMIEDGICIACS.

This sequence belongs to the VPS41 family. Probable component of the homotypic fusion and vacuole protein sorting (HOPS) complex consisting of the core class C Vps proteins vps-11, vps-16, vps-18, and which further associates with vps-33.1, vps-39 and vps-41.

The protein resides in the endosome membrane. Its subcellular location is the late endosome. It localises to the lysosome. It is found in the golgi apparatus. The protein localises to the trans-Golgi network. The protein resides in the early endosome. Its subcellular location is the cytoplasmic vesicle. It localises to the clathrin-coated vesicle. Functionally, plays a role in vesicle-mediated protein trafficking to lysosomal compartments including the endocytic membrane transport pathways. Believed to act in part as a core component of the putative HOPS endosomal tethering complex which is proposed to be involved in the rab-5-to-rab-7 endosome conversion probably implicating sand-1, and via binding SNAREs and SNARE complexes to mediate tethering and docking events during SNARE-mediated membrane fusion. The HOPS complex is proposed to be recruited to rab-7 on the late endosomal membrane and to regulate late endocytic, phagocytic and autophagic traffic towards lysosomes. Within the HOPS complex, contributes to the normal development of gut granules in the adult intestine. May mediate the tethering of autophagosomes with lysosomes. Has a role in the negative regulation of apoptosis. Required for uptake of exogenous dsRNA which is used in experimental RNA silencing. The protein is Vacuolar protein sorting-associated protein 41 homolog of Caenorhabditis briggsae.